Here is a 176-residue protein sequence, read N- to C-terminus: Small ribosomal subunit protein uS5c (176 aa).

Residues 26 to 89 form the S5 DRBM domain; it reads LVERLIKISR…TDGRKNLIEL (64 aa).

The protein belongs to the universal ribosomal protein uS5 family. As to quaternary structure, part of the 30S ribosomal subunit. Contacts protein S4.

It is found in the plastid. Its subcellular location is the chloroplast. In terms of biological role, with S4 and S12 plays an important role in translational accuracy. This chain is Small ribosomal subunit protein uS5c (rps5), found in Phaeodactylum tricornutum (strain CCAP 1055/1).